The primary structure comprises 289 residues: Iodotyrosine deiodinase 1 (289 aa).

Residues 1 to 21 traverse the membrane as a helical segment; the sequence is MYFLTPILVAILCILVVWIFK. The span at 29 to 58 shows a compositional bias: basic and acidic residues; sequence KKKGEPRTRAEARPWVDEDLKDSSDLHQAE. A disordered region spans residues 29 to 69; that stretch reads KKKGEPRTRAEARPWVDEDLKDSSDLHQAEEDADEWQESEE. The segment covering 59 to 69 has biased composition (acidic residues); it reads EDADEWQESEE. FMN contacts are provided by residues 100–104, S128, and 128–129; these read RRSVR and SG. Residues A130, E157, Y161, and K182 each coordinate 3-iodo-L-tyrosine. Residues 237–239 and R279 each bind FMN; that span reads TTT.

This sequence belongs to the nitroreductase family. Homodimer. FMN serves as cofactor. In terms of tissue distribution, expressed at a high level in thyroid gland (at protein level). Expressed at a high level in thyroid gland and at lower level in kidney and trachea.

It localises to the cell membrane. The protein resides in the cytoplasmic vesicle membrane. It catalyses the reaction 2 iodide + L-tyrosine + 2 NADP(+) = 3,5-diiodo-L-tyrosine + 2 NADPH + H(+). It carries out the reaction iodide + L-tyrosine + NADP(+) = 3-iodo-L-tyrosine + NADPH. The enzyme catalyses 3-iodo-L-tyrosine + iodide + NADP(+) = 3,5-diiodo-L-tyrosine + NADPH + H(+). The catalysed reaction is L-tyrosine + chloride + NADP(+) = 3-chloro-L-tyrosine + NADPH. It catalyses the reaction bromide + L-tyrosine + NADP(+) = 3-bromo-L-tyrosine + NADPH. Functionally, catalyzes the dehalogenation of halotyrosines such as 3-bromo-L-tyrosine, 3-chloro-L-tyrosine, 3-iodo-L-tyrosine and 3,5-diiodo-L-tyrosine. During thyroid hormone biosynthesis, facilitates iodide salvage by catalysing the oxidative NADPH-dependent deiodination of the halogenated by-products of thyroid hormone production, monoiodotyrosine (L-MIT) and diiodotyrosine (L-DIT). The scavanged iodide can then reenter the hormone-producing pathways. Acts more efficiently on 3-iodo-L-tyrosine than 3,5-diiodo-L-tyrosine. The chain is Iodotyrosine deiodinase 1 from Homo sapiens (Human).